The following is a 245-amino-acid chain: uncharacterized protein (245 aa).

Residues 33–176 (QRAAYQQVQA…SSQRDMLTAT (144 aa)) are a coiled coil.

This is an uncharacterized protein from Mycobacterium tuberculosis (strain CDC 1551 / Oshkosh).